Consider the following 221-residue polypeptide: MPGKPVLHYFDGRGRMEPIRWLLAAAGVEFEENFLKTRDDLARLRSDGSLMFEQVPMVEIDGMKLVQTKAILNYIATKYNLYGKDMKERALIDMYAEGVADLELMVLYYPYMPPGEKEASLAKIKDKARNRYFPAYEKVLKSHGQDYLVGNKLSRADVSLVELLYHVEEMDPGIVDNFPLLKALRTRVSNLPTVKKFLQPGSQRKPFDDEKCVESAKKIFS.

In terms of domain architecture, GST N-terminal spans 3–83; the sequence is GKPVLHYFDG…YIATKYNLYG (81 aa). Lys4 bears the N6-succinyllysine mark. Glutathione-binding positions include Tyr9, Arg45, 54-55, and 67-68; these read QV and QT. Residues 85 to 207 enclose the GST C-terminal domain; the sequence is DMKERALIDM…LQPGSQRKPF (123 aa).

It belongs to the GST superfamily. Alpha family. As to quaternary structure, heterodimer of YC1 and YC2. As to expression, liver, nasal mucosa and epididymis.

The protein resides in the cytoplasm. The enzyme catalyses RX + glutathione = an S-substituted glutathione + a halide anion + H(+). Its function is as follows. Conjugation of reduced glutathione to a wide number of exogenous and endogenous hydrophobic electrophiles. Has substantial activity toward aflatoxin B1-8,9-epoxide. In Rattus norvegicus (Rat), this protein is Glutathione S-transferase alpha-5 (Gsta5).